Reading from the N-terminus, the 357-residue chain is 3-isopropylmalate dehydrogenase (357 aa).

An NAD(+)-binding site is contributed by 77 to 90 (GPKWDTLPGEKRPE). 4 residues coordinate substrate: Arg-97, Arg-107, Arg-136, and Asp-224. Mg(2+) is bound by residues Asp-224, Asp-248, and Asp-252. NAD(+) is bound at residue 282-294 (GSAPDIAGQDLAN).

It belongs to the isocitrate and isopropylmalate dehydrogenases family. LeuB type 1 subfamily. Homodimer. Mg(2+) serves as cofactor. Requires Mn(2+) as cofactor.

The protein resides in the cytoplasm. The catalysed reaction is (2R,3S)-3-isopropylmalate + NAD(+) = 4-methyl-2-oxopentanoate + CO2 + NADH. It functions in the pathway amino-acid biosynthesis; L-leucine biosynthesis; L-leucine from 3-methyl-2-oxobutanoate: step 3/4. In terms of biological role, catalyzes the oxidation of 3-carboxy-2-hydroxy-4-methylpentanoate (3-isopropylmalate) to 3-carboxy-4-methyl-2-oxopentanoate. The product decarboxylates to 4-methyl-2 oxopentanoate. The sequence is that of 3-isopropylmalate dehydrogenase from Clostridium acetobutylicum (strain ATCC 824 / DSM 792 / JCM 1419 / IAM 19013 / LMG 5710 / NBRC 13948 / NRRL B-527 / VKM B-1787 / 2291 / W).